We begin with the raw amino-acid sequence, 514 residues long: LWamide neuropeptides (514 aa).

Positions 1 to 22 (MALKCHLVLLAITLLLAQCSGS) are cleaved as a signal peptide. A compositionally biased stretch (basic and acidic residues) spans 23–53 (VDKKDSTTNHLDEKKTDSTEAHIVQETDALK). A propeptide spanning residues 23 to 75 (VDKKDSTTNHLDEKKTDSTEAHIVQETDALKENSYLGAEEESKEEDKKRSAAP) is cleaved from the precursor. Residues 23–180 (VDKKDSTTNH…PGLWGRSADA (158 aa)) form a disordered region. Residues Trp81 and Trp90 each carry the tryptophan amide modification. Positions 93–97 (SADAG) are excised as a propeptide. Tryptophan amide is present on residues Trp102 and Trp111. Positions 114 to 118 (SADAG) are excised as a propeptide. 2 positions are modified to tryptophan amide: Trp123 and Trp132. Positions 135–139 (SADAG) are excised as a propeptide. Trp144 and Trp153 each carry tryptophan amide. Residues 156 to 160 (SADAG) constitute a propeptide that is removed on maturation. A tryptophan amide mark is found at Trp165 and Trp174. A propeptide spanning residues 177–181 (SADAR) is cleaved from the precursor. Residue Trp186 is modified to Tryptophan amide. The propeptide occupies 190–199 (EIYALWGGKR). The residue at position 205 (Trp205) is a Tryptophan amide. Residues 208-212 (SADPG) constitute a propeptide that is removed on maturation. Trp217 bears the Tryptophan amide mark. The propeptide occupies 221 to 230 (ELVGLWGGKR). Trp236 carries the post-translational modification Tryptophan amide. Positions 239 to 243 (SAEAG) are excised as a propeptide. Residues Trp248 and Trp257 each carry the tryptophan amide modification. Positions 258 to 475 (GRSADPLQPG…GRSAGSGQLG (218 aa)) are disordered. Positions 260 to 264 (SADPL) are excised as a propeptide. Trp269 and Trp278 each carry tryptophan amide. The propeptide occupies 281 to 284 (SADP). Residues Trp290 and Trp299 each carry the tryptophan amide modification. A propeptide spanning residues 302 to 305 (SADP) is cleaved from the precursor. Residues Trp311 and Trp320 each carry the tryptophan amide modification. Residues 323-326 (SADP) constitute a propeptide that is removed on maturation. A tryptophan amide mark is found at Trp332 and Trp341. Positions 344–347 (SADP) are excised as a propeptide. Trp353 is subject to Tryptophan amide. The propeptide occupies 356 to 366 (SPGLWGRSADP). Trp372 is subject to Tryptophan amide. A propeptide spanning residues 376–387 (QNPGFWGRSADP) is cleaved from the precursor. Trp393 and Trp402 each carry tryptophan amide. Positions 405–408 (SADP) are excised as a propeptide. 2 positions are modified to tryptophan amide: Trp414 and Trp423. Residues 426-429 (SADP) constitute a propeptide that is removed on maturation. Residues Trp435 and Trp444 each carry the tryptophan amide modification. Positions 447–450 (SADP) are excised as a propeptide. 2 positions are modified to tryptophan amide: Trp456 and Trp465. A propeptide spanning residues 468-472 (SAGSG) is cleaved from the precursor. Trp477 and Trp487 each carry tryptophan amide. Residues 489–514 (RSAEPPQFEDLEDLKKKSAIPQPKGQ) form a disordered region. The propeptide occupies 490–514 (SAEPPQFEDLEDLKKKSAIPQPKGQ).

The protein belongs to the LWamide neuropeptide family.

Its subcellular location is the secreted. In terms of biological role, metamorphosin A may be part of an internal signaling system involved in control of metamorphosis. The polypeptide is LWamide neuropeptides (Anthopleura elegantissima (Green aggregating anemone)).